The chain runs to 301 residues: MAMLVLVPGRVMRPLGGQLWRFLPRGLEFWGPAEGTARVLLRQFCARQAEAWRASGRPGYCLGTRPLSTARPPPPWSQKGPGDSTRPSKPGPVSWKSLAITFAIGGALLAGMKHVKKEKAEKLEKERQRHIGKPLLGGPFSLTTHTGERKTDKDYLGQWLLIYFGFTHCPDVCPEELEKMIQVVDEIDSITTLPDLTPLFISIDPERDTKEAIANYVKEFSPKLVGLTGTREEVDQVARAYRVYYSPGPKDEDEDYIVDHTIIMYLIGPDGEFLDYFGQNKRKGEIAASIATHMRPYRKKS.

The N-terminal 67 residues, 1-67, are a transit peptide targeting the mitochondrion; that stretch reads MAMLVLVPGR…PGYCLGTRPL (67 aa). Positions 63–91 are disordered; it reads GTRPLSTARPPPPWSQKGPGDSTRPSKPG. The Mitochondrial matrix portion of the chain corresponds to 68 to 92; sequence STARPPPPWSQKGPGDSTRPSKPGP. Residues 93–111 form a helical membrane-spanning segment; it reads VSWKSLAITFAIGGALLAG. Over 112-301 the chain is Mitochondrial intermembrane; the sequence is MKHVKKEKAE…THMRPYRKKS (190 aa). Positions 118-131 are important for dimerization; the sequence is EKAEKLEKERQRHI. The Cu cation site is built by cysteine 169, cysteine 173, and histidine 260. An intrachain disulfide couples cysteine 169 to cysteine 173.

This sequence belongs to the SCO1/2 family. In terms of assembly, homodimer. Interacts with COA6. Found in a complex with TMEM177, COX20, COA6, MT-CO2/COX2, COX18 and SCO2. Interacts with TMEM177 in a COX20-dependent manner. Interacts with COX20 in a MT-CO2/COX2- and COX18-dependent manner. Interacts with COX16. As to expression, predominantly expressed in tissues characterized by high rates of oxidative phosphorylation (OxPhos), including muscle, heart, and brain.

The protein resides in the mitochondrion. The protein localises to the mitochondrion inner membrane. Functionally, copper metallochaperone essential for the maturation of cytochrome c oxidase subunit II (MT-CO2/COX2). Not required for the synthesis of MT-CO2/COX2 but plays a crucial role in stabilizing MT-CO2/COX2 during its subsequent maturation. Involved in transporting copper to the Cu(A) site on MT-CO2/COX2. Plays an important role in the regulation of copper homeostasis by controlling the abundance and cell membrane localization of copper transporter CTR1. The protein is Protein SCO1 homolog, mitochondrial (SCO1) of Homo sapiens (Human).